The sequence spans 196 residues: DnaA initiator-associating protein DiaA (196 aa).

Residues Leu-34–Asp-196 enclose the SIS domain.

This sequence belongs to the SIS family. DiaA subfamily. In terms of assembly, homotetramer; dimer of dimers.

Its function is as follows. Required for the timely initiation of chromosomal replication via direct interactions with the DnaA initiator protein. The protein is DnaA initiator-associating protein DiaA of Cronobacter sakazakii (strain ATCC BAA-894) (Enterobacter sakazakii).